The sequence spans 241 residues: dTTP/UTP pyrophosphatase (241 aa).

S38 is subject to Phosphoserine. Catalysis depends on D105, which acts as the Proton acceptor.

This sequence belongs to the Maf family. YhdE subfamily. It depends on a divalent metal cation as a cofactor.

Its subcellular location is the cytoplasm. It localises to the nucleus. It catalyses the reaction dTTP + H2O = dTMP + diphosphate + H(+). The enzyme catalyses UTP + H2O = UMP + diphosphate + H(+). Its function is as follows. Nucleoside triphosphate pyrophosphatase that hydrolyzes dTTP and UTP. May have a dual role in cell division arrest and in preventing the incorporation of modified nucleotides into cellular nucleic acids. The protein is dTTP/UTP pyrophosphatase of Schizosaccharomyces pombe (strain 972 / ATCC 24843) (Fission yeast).